We begin with the raw amino-acid sequence, 303 residues long: Oxygen-dependent coproporphyrinogen-III oxidase (303 aa).

Substrate is bound at residue Ser93. The a divalent metal cation site is built by His97 and His107. The active-site Proton donor is His107. 109–111 (NIR) lines the substrate pocket. A divalent metal cation-binding residues include His146 and His176. Residues 241 to 276 (YVEFNLLLDRGTLFGIQSNGRIESILSSMPPLVKWE) form an important for dimerization region.

The protein belongs to the aerobic coproporphyrinogen-III oxidase family. As to quaternary structure, homodimer. It depends on a divalent metal cation as a cofactor.

It is found in the cytoplasm. The enzyme catalyses coproporphyrinogen III + O2 + 2 H(+) = protoporphyrinogen IX + 2 CO2 + 2 H2O. The protein operates within porphyrin-containing compound metabolism; protoporphyrin-IX biosynthesis; protoporphyrinogen-IX from coproporphyrinogen-III (O2 route): step 1/1. Involved in the heme biosynthesis. Catalyzes the aerobic oxidative decarboxylation of propionate groups of rings A and B of coproporphyrinogen-III to yield the vinyl groups in protoporphyrinogen-IX. This Wigglesworthia glossinidia brevipalpis protein is Oxygen-dependent coproporphyrinogen-III oxidase.